Here is a 119-residue protein sequence, read N- to C-terminus: Ribonuclease P protein component (119 aa).

This sequence belongs to the RnpA family. As to quaternary structure, consists of a catalytic RNA component (M1 or rnpB) and a protein subunit.

The enzyme catalyses Endonucleolytic cleavage of RNA, removing 5'-extranucleotides from tRNA precursor.. In terms of biological role, RNaseP catalyzes the removal of the 5'-leader sequence from pre-tRNA to produce the mature 5'-terminus. It can also cleave other RNA substrates such as 4.5S RNA. The protein component plays an auxiliary but essential role in vivo by binding to the 5'-leader sequence and broadening the substrate specificity of the ribozyme. This Streptococcus equi subsp. zooepidemicus (strain MGCS10565) protein is Ribonuclease P protein component.